Here is a 317-residue protein sequence, read N- to C-terminus: Melanocyte-stimulating hormone receptor (317 aa).

The Extracellular segment spans residues 1–37 (MRVQGSQRRLLGSLNSTPTATPHLGLAANQTGARCLE). An N-linked (GlcNAc...) asparagine glycan is attached at Asn29. Residues 38–63 (VSIPDGLFLSLGLVSLVENVLVVTAI) form a helical membrane-spanning segment. At 64–72 (AKNRNLHSP) the chain is on the cytoplasmic side. A helical transmembrane segment spans residues 73 to 93 (MYCFICCLALSDLLVSGSNML). The Extracellular segment spans residues 94-118 (ETAVTLLLEAGALAARAAVVQQLDN). A helical transmembrane segment spans residues 119-140 (VIDVITCSSMLSSLCFLGAIAV). The Cytoplasmic segment spans residues 141-163 (DRYISIFYALRYHSIVTLPRARR). A helical membrane pass occupies residues 164–183 (AIAAIWVASVLCSTLFIAYY). At 184 to 191 (DHAAVLLC) the chain is on the extracellular side. The helical transmembrane segment at 192-211 (LVVFFLAMLVLMAVLYVHML) threads the bilayer. Residues 212–240 (ARACQHAQGIARLHKRQRLAHQGFGLKGA) are Cytoplasmic-facing. A helical membrane pass occupies residues 241-266 (ATLTILLGIFFLCWGPFFLHLTLIVL). At 267-279 (CPQHPTCSCIFKN) the chain is on the extracellular side. A helical membrane pass occupies residues 280–300 (FNLFLALIICNAIIDPLIYAF). Topologically, residues 301 to 317 (RSQELRRTLKEVLLCSW) are cytoplasmic. The S-palmitoyl cysteine moiety is linked to residue Cys315.

Belongs to the G-protein coupled receptor 1 family. In terms of assembly, interacts with MGRN1, but does not undergo MGRN1-mediated ubiquitination; this interaction competes with GNAS-binding and thus inhibits agonist-induced cAMP production. Interacts with OPN3; the interaction results in a decrease in MC1R-mediated cAMP signaling and ultimately a decrease in melanin production in melanocytes.

The protein localises to the cell membrane. Functionally, receptor for MSH (alpha, beta and gamma) and ACTH. The activity of this receptor is mediated by G proteins which activate adenylate cyclase. Mediates melanogenesis, the production of eumelanin (black/brown) and phaeomelanin (red/yellow), via regulation of cAMP signaling in melanocytes. This chain is Melanocyte-stimulating hormone receptor (MC1R), found in Macaca nigra (Celebes black macaque).